Consider the following 411-residue polypeptide: Phospholipase A1-II 6 (411 aa).

The active-site Acyl-ester intermediate is the Ser-226. Active-site charge relay system residues include Ser-226, Asp-296, and His-334.

The protein belongs to the AB hydrolase superfamily. Lipase family.

The protein localises to the cytoplasm. In terms of biological role, acylhydrolase that catalyzes the hydrolysis of phospholipids at the sn-1 position. This is Phospholipase A1-II 6 from Oryza sativa subsp. japonica (Rice).